A 183-amino-acid chain; its full sequence is Probable chemoreceptor glutamine deamidase CheD (183 aa).

Belongs to the CheD family.

It carries out the reaction L-glutaminyl-[protein] + H2O = L-glutamyl-[protein] + NH4(+). Functionally, probably deamidates glutamine residues to glutamate on methyl-accepting chemotaxis receptors (MCPs), playing an important role in chemotaxis. This is Probable chemoreceptor glutamine deamidase CheD from Rhizobium meliloti (strain 1021) (Ensifer meliloti).